The following is a 291-amino-acid chain: Endo-1,4-beta-xylanase 11B (291 aa).

Positions 1 to 19 are cleaved as a signal peptide; it reads MVAFSSLFLGASIAATALA. The region spanning 34–222 is the GH11 domain; it reads TYTQSATGTH…SSGSARINVG (189 aa). N93 carries an N-linked (GlcNAc...) asparagine glycan. The active-site Nucleophile is the E118. E209 (proton donor) is an active-site residue. The segment at 223 to 246 is disordered; that stretch reads GGSTGGGNNGGGNNGGNPGGNPGG. The CBM1 domain occupies 255–291; sequence NCSPRWGQCGGQGWNGPTCCESGTTCRQQNQWYSQCL.

The protein belongs to the glycosyl hydrolase 11 (cellulase G) family.

It is found in the secreted. The enzyme catalyses Endohydrolysis of (1-&gt;4)-beta-D-xylosidic linkages in xylans.. Its pathway is glycan degradation; xylan degradation. The activity iss completely inhibited by Hg(2+), a metal ion that interacts with Trp and oxidizes the indole ring, and is significantly enhanced by beta-mercaptoethanol, which counteracts the oxidation effects of the S-S linkage between Cys residues. Its function is as follows. Endo-1,4-beta-xylanase involved in the hydrolysis of xylan, a major structural heterogeneous polysaccharide found in plant biomass representing the second most abundant polysaccharide in the biosphere, after cellulose. Shows maximum activity on soluble wheat arabinoxylan (defined as 100%), moderate activity on birchwood xylan (80.5%) and beechwood xylan (76.2%), and weak activity on insoluble wheat arabinoxylan (7.0%). Has no activity towards glucan or carboxymethyl cellulose-sodium (CMC-Na). In Humicola insolens (Soft-rot fungus), this protein is Endo-1,4-beta-xylanase 11B.